We begin with the raw amino-acid sequence, 255 residues long: uncharacterized protein (255 aa).

The N-terminal stretch at 1–18 (MRILIILSIILCSLFTKA) is a signal peptide.

Belongs to the MlaA family.

This is an uncharacterized protein from Rickettsia bellii (strain RML369-C).